The chain runs to 770 residues: ARF GTPase-activating protein GIT1 (770 aa).

Residues 1–124 enclose the Arf-GAP domain; sequence MSRKGPRAEV…AFVHKLPCRD (124 aa). The segment at 1 to 124 is interaction with gamma-tubulin and localization to the centrosome; the sequence is MSRKGPRAEV…AFVHKLPCRD (124 aa). Residues 11-34 form a C4-type zinc finger; that stretch reads CADCSAPDPGWASISRGVLVCDEC. 3 ANK repeats span residues 132–161, 166–195, and 199–228; these read DLSKQLHSSVRTGNLETCLRLLSLGAQANF, KGTTPLHVAAKAGQTLQAELLVVYGADPGS, and NGRTPIDYARQAGHHELAERLVECQYELTD. Position 224 is a phosphotyrosine (Tyr-224). Residues 245–374 form an interaction with PCLO region; it reads HYIIPQMADR…QGKSLSSPTD (130 aa). Residues 253–424 form an interaction with PTK2/FAK1 region; sequence DRSRQKCMSQ…NRARSMDSSD (172 aa). The segment at 254–376 is interaction with ARHGEF7; that stretch reads RSRQKCMSQS…KSLSSPTDNL (123 aa). A disordered region spans residues 363–425; the sequence is RQQGKSLSSP…RARSMDSSDL (63 aa). The span at 366-383 shows a compositional bias: polar residues; it reads GKSLSSPTDNLELSARNQ. 2 positions are modified to phosphoserine: Ser-368 and Ser-371. Residue Thr-373 is modified to Phosphothreonine. The tract at residues 375 to 596 is interaction with NCK2 and GRIN3A; it reads NLELSARNQS…QEGSRHASKL (222 aa). The required for localization at synapses stretch occupies residues 375 to 596; the sequence is NLELSARNQS…QEGSRHASKL (222 aa). 2 positions are modified to phosphoserine: Ser-379 and Ser-384. Tyr-392 bears the Phosphotyrosine mark. Ser-394 and Ser-397 each carry phosphoserine. The span at 394-403 shows a compositional bias: acidic residues; that stretch reads SVASDEDTDQ. Residue Thr-401 is modified to Phosphothreonine. A phosphoserine mark is found at Ser-419, Ser-422, and Ser-426. The tract at residues 420–475 is interaction with MAPK1; sequence MDSSDLSDGAVTLQEYLELKKALATSEAKVQQLMKVNSSLSDELRKLQREIHKLQA. The interaction with IKBKG stretch occupies residues 429–629; it reads AVTLQEYLEL…EGKRFLELSK (201 aa). Positions 449–483 form a coiled coil; sequence VQQLMKVNSSLSDELRKLQREIHKLQAENLQLRQP. 2 positions are modified to phosphoserine: Ser-507 and Ser-545. Thr-546 carries the phosphothreonine modification. A phosphotyrosine mark is found at Tyr-554 and Tyr-563. A phosphoserine mark is found at Ser-570, Ser-580, Ser-601, and Ser-605. Over residues 574 to 586 the composition is skewed to low complexity; sequence VTFTPSSPLLSSS. Residues 574–615 are disordered; it reads VTFTPSSPLLSSSQEGSRHASKLSRHGSGAESDYENTQSGEP. Residue Thr-610 is modified to Phosphothreonine. Position 639 is a phosphoserine (Ser-639). The interval 646 to 770 is interaction with PXN and TGFB1I1; it reads PGLPSTEDVI…VTITTREKKQ (125 aa).

As to quaternary structure, forms homodimers and possibly oligomers. May form heterooligomers with GIT2. Interacts with G protein-coupled receptor kinases, including GRK2, GRK3, GRK5 and GRK6. Interacts with PPFIA1, PPFIA2 and PPFIA4. Interacts with GRIP1 and forms a ternary complex with PPFIA1 and GRIP1. Directly interacts with ARHGEF7/beta-PIX, forming in vitro a heptameric complex made of a GIT1 dimer and an ARHGEF7 trimer. Directly interacts with PXN/paxillin; this interaction is enhanced in the presence of ARHGEF7. Directly interacts (via C-terminus) with TGFB1I1/Hic-5 (via LD motif 3). Directly interacts with PTK2/FAK1. May interact with PTK2B/PYK2; this interaction may be indirect. Interacts with AMPA receptors GRIA2/3. Directly interacts with protein Piccolo/PCLO. Forms a complex with Ephrin-B1/EFNB1 and NCK2/GRB4 (via SH2); this interaction is important for spine morphogenesis and synapse formation. Interaction with NCK2 is transient and depends upon GIT1 phosphorylation at Tyr-392. Interacts with GRIN3A/GluN3A (via C-terminus); this interaction competes with GIT1 interaction with ARHGEF7 and limits synaptic localization of GIT1. Interacts with IKBKG/NEMO in resting bone mesenchymal stem cells, as well as in TNF-stimulated cells; this interaction may increase IKBKG affinity for 'Lys-63'-linked polyubiquitin chains. Interacts with GABA(A) receptors, including GABRB3 and GABRG2. Interacts with SCRIB. Interacts (via N- and C-terminus) with ENTR1/SDCCAG3 (via N-terminus); this interaction is direct. May form a tripartite complex with ENTR1 and PTPN13. Interacts with YWHAZ. Interacts with PAK1 and PAK3. Directly interacts (via N-terminus) with gamma-tubulin. Interacts with MAPK1 and MAPK3; this interaction is required for MAPK1/3 recruitment to focal adhesions. Post-translationally, phosphorylated on tyrosine residues by PTK2/FAK1 and SRC in growing fibroblasts. Phosphorylation at Tyr-392 is induced by activation of Ephrin-B1/EFNB1 and catalyzed by SRC family kinases. It is required for the interaction with NCK2 and for GIT1 recruitment to synapses in hippocampal neurons. As to expression, widely expressed. Expressed at high levels in testis (at protein level). Expressed in the brain, including in CA1 hippocampal neurons, in the amygdala, and thalamic nuclei (at protein level).

It localises to the cytoplasm. Its subcellular location is the synapse. The protein resides in the presynapse. It is found in the postsynapse. The protein localises to the postsynaptic density. It localises to the cell junction. Its subcellular location is the focal adhesion. The protein resides in the cell projection. It is found in the lamellipodium. The protein localises to the cytoskeleton. It localises to the microtubule organizing center. Its subcellular location is the centrosome. The protein resides in the spindle pole. GTPase-activating protein for ADP ribosylation factor family members, including ARF1. Multidomain scaffold protein that interacts with numerous proteins and therefore participates in many cellular functions, including receptor internalization, focal adhesion remodeling, and signaling by both G protein-coupled receptors and tyrosine kinase receptors. Through PAK1 activation, positively regulates microtubule nucleation during interphase. Plays a role in the regulation of cytokinesis; for this function, may act in a pathway also involving ENTR1 and PTPN13. May promote cell motility both by regulating focal complex dynamics and by the activation of RAC1. May act as scaffold for MAPK1/3 signal transduction, recruiting MAPK1/3 to focal adhesions after EGF stimulation via a Src-dependent pathway, hence stimulating cell migration. Plays a role in brain development and function. Involved in the regulation of spine density and synaptic plasticity that is required for processes involved in learning. Plays an important role in dendritic spine morphogenesis and synapse formation. In hippocampal neurons, recruits guanine nucleotide exchange factors (GEFs), such as ARHGEF7/beta-PIX, to the synaptic membrane. These in turn locally activate RAC1, which is an essential step for spine morphogenesis and synapse formation. May contribute to the organization of presynaptic active zones through oligomerization and formation of a Piccolo/PCLO-based protein network, which includes ARHGEF7/beta-PIX and FAK1. In neurons, through its interaction with liprin-alpha family members, may be required for AMPA receptor (GRIA2/3) proper targeting to the cell membrane. In complex with GABA(A) receptors and ARHGEF7, plays a crucial role in regulating GABA(A) receptor synaptic stability, maintaining GPHN/gephyrin scaffolds and hence GABAergic inhibitory synaptic transmission, by locally coordinating RAC1 and PAK1 downstream effector activity, leading to F-actin stabilization. May also be important for RAC1 downstream signaling pathway through PAK3 and regulation of neuronal inhibitory transmission at presynaptic input. Required for successful bone regeneration during fracture healing. The function in intramembranous ossification may, at least partly, exerted by macrophages in which GIT1 is a key negative regulator of redox homeostasis, IL1B production, and glycolysis, acting through the ERK1/2/NRF2/NFE2L2 axis. May also play a role in angiogenesis during fracture healing. In this process, may regulate activation of the canonical NF-kappa-B signal in bone mesenchymal stem cells by enhancing the interaction between NEMO and 'Lys-63'-ubiquitinated RIPK1/RIP1, eventually leading to enhanced production of VEGFA and others angiogenic factors. Essential for VEGF signaling through the activation of phospholipase C-gamma and ERK1/2, hence may control endothelial cell proliferation and angiogenesis. This is ARF GTPase-activating protein GIT1 from Rattus norvegicus (Rat).